The primary structure comprises 206 residues: Anti-sigma-W factor RsiW (206 aa).

The Cytoplasmic segment spans residues 1–87 (MSCPEHIVQL…ASINRWLKAH (87 aa)). Histidine 30, cysteine 34, and cysteine 37 together coordinate Zn(2+). Residues 88–108 (PFLVAAALFAILMGGSFFSSW) form a helical membrane-spanning segment. The Extracellular segment spans residues 109-206 (KNDHDFSVSS…SVFGVKESKE (98 aa)).

Belongs to the zinc-associated anti-sigma factor (ZAS) superfamily. Anti-sigma-W factor family. Zn(2+) serves as cofactor. In terms of processing, is processed by three successive proteolytic events. First, the extracellular region of RsiW is cleaved by PrsW (Site-1 cleavage) in response to cell envelope stresses. Next, it undergoes cleavage at an intramembrane site (Site-2 cleavage) mediated by RasP. This cleavage uncovers a cryptic proteolytic tag with conserved alanine residues in the transmembrane segment, that is recognized mainly by the ClpXP protease, which completely degrades the protein in the cytoplasm and leads to the induction of the sigma-W-controlled genes.

The protein localises to the membrane. Is the anti-sigma factor for SigW. The presence of RsiW leads to the inactivation of SigW, and its proteolytic destruction to sigma-W activation. The polypeptide is Anti-sigma-W factor RsiW (rsiW) (Bacillus licheniformis (strain ATCC 14580 / DSM 13 / JCM 2505 / CCUG 7422 / NBRC 12200 / NCIMB 9375 / NCTC 10341 / NRRL NRS-1264 / Gibson 46)).